A 505-amino-acid polypeptide reads, in one-letter code: Aspartyl/glutamyl-tRNA(Asn/Gln) amidotransferase subunit B (505 aa).

It belongs to the GatB/GatE family. GatB subfamily. As to quaternary structure, heterotrimer of A, B and C subunits.

It carries out the reaction L-glutamyl-tRNA(Gln) + L-glutamine + ATP + H2O = L-glutaminyl-tRNA(Gln) + L-glutamate + ADP + phosphate + H(+). The catalysed reaction is L-aspartyl-tRNA(Asn) + L-glutamine + ATP + H2O = L-asparaginyl-tRNA(Asn) + L-glutamate + ADP + phosphate + 2 H(+). Allows the formation of correctly charged Asn-tRNA(Asn) or Gln-tRNA(Gln) through the transamidation of misacylated Asp-tRNA(Asn) or Glu-tRNA(Gln) in organisms which lack either or both of asparaginyl-tRNA or glutaminyl-tRNA synthetases. The reaction takes place in the presence of glutamine and ATP through an activated phospho-Asp-tRNA(Asn) or phospho-Glu-tRNA(Gln). The sequence is that of Aspartyl/glutamyl-tRNA(Asn/Gln) amidotransferase subunit B from Corynebacterium jeikeium (strain K411).